We begin with the raw amino-acid sequence, 174 residues long: ATP-dependent protease subunit HslV (174 aa).

Thr2 is an active-site residue. Na(+) is bound by residues Gly159, Asp162, and Thr165.

The protein belongs to the peptidase T1B family. HslV subfamily. A double ring-shaped homohexamer of HslV is capped on each side by a ring-shaped HslU homohexamer. The assembly of the HslU/HslV complex is dependent on binding of ATP.

The protein resides in the cytoplasm. It catalyses the reaction ATP-dependent cleavage of peptide bonds with broad specificity.. Its activity is regulated as follows. Allosterically activated by HslU binding. Functionally, protease subunit of a proteasome-like degradation complex believed to be a general protein degrading machinery. This Lacticaseibacillus casei (strain BL23) (Lactobacillus casei) protein is ATP-dependent protease subunit HslV.